A 247-amino-acid polypeptide reads, in one-letter code: 3-deoxy-manno-octulosonate cytidylyltransferase (247 aa).

The protein belongs to the KdsB family.

It localises to the cytoplasm. The enzyme catalyses 3-deoxy-alpha-D-manno-oct-2-ulosonate + CTP = CMP-3-deoxy-beta-D-manno-octulosonate + diphosphate. It participates in nucleotide-sugar biosynthesis; CMP-3-deoxy-D-manno-octulosonate biosynthesis; CMP-3-deoxy-D-manno-octulosonate from 3-deoxy-D-manno-octulosonate and CTP: step 1/1. It functions in the pathway bacterial outer membrane biogenesis; lipopolysaccharide biosynthesis. Functionally, activates KDO (a required 8-carbon sugar) for incorporation into bacterial lipopolysaccharide in Gram-negative bacteria. In Leptospira interrogans serogroup Icterohaemorrhagiae serovar Lai (strain 56601), this protein is 3-deoxy-manno-octulosonate cytidylyltransferase.